We begin with the raw amino-acid sequence, 206 residues long: Uridine kinase (206 aa).

Position 9–16 (9–16 (GGSGSGKT)) interacts with ATP.

Belongs to the uridine kinase family. In terms of assembly, monomer.

It is found in the cytoplasm. The catalysed reaction is uridine + ATP = UMP + ADP + H(+). It carries out the reaction cytidine + ATP = CMP + ADP + H(+). The protein operates within pyrimidine metabolism; CTP biosynthesis via salvage pathway; CTP from cytidine: step 1/3. It functions in the pathway pyrimidine metabolism; UMP biosynthesis via salvage pathway; UMP from uridine: step 1/1. In Borreliella burgdorferi (strain ATCC 35210 / DSM 4680 / CIP 102532 / B31) (Borrelia burgdorferi), this protein is Uridine kinase (udk).